Reading from the N-terminus, the 230-residue chain is Small ribosomal subunit protein uS3 (230 aa).

Residues 39–107 (VRKFLVEKLQ…PAQINIAEIR (69 aa)) form the KH type-2 domain.

It belongs to the universal ribosomal protein uS3 family. In terms of assembly, part of the 30S ribosomal subunit. Forms a tight complex with proteins S10 and S14.

Functionally, binds the lower part of the 30S subunit head. Binds mRNA in the 70S ribosome, positioning it for translation. This Shewanella baltica (strain OS223) protein is Small ribosomal subunit protein uS3.